We begin with the raw amino-acid sequence, 361 residues long: Rho-GTPase-activating protein 5 (361 aa).

The Rho-GAP domain occupies I52–I245. Low complexity predominate over residues S306–S323. Residues S306–S345 are disordered.

It is found in the membrane. Its function is as follows. GTPase-activating protein for Rho1. Has a role in the negative regulation of (1-3)beta-D-glucan synthase activity and cell integrity. The chain is Rho-GTPase-activating protein 5 (rga5) from Schizosaccharomyces pombe (strain 972 / ATCC 24843) (Fission yeast).